The following is a 923-amino-acid chain: Protein dct-6 (923 aa).

Residues Asp312 to Gln347 are a coiled coil.

In terms of biological role, may have a role in tumor suppression. The polypeptide is Protein dct-6 (dct-6) (Caenorhabditis elegans).